The sequence spans 353 residues: Putative glycosyltransferase TagX (353 aa).

The protein belongs to the glycosyltransferase 2 family.

The protein is Putative glycosyltransferase TagX (tagX) of Staphylococcus aureus (strain MRSA252).